The following is a 600-amino-acid chain: Dihydroxy-acid dehydratase (600 aa).

Aspartate 82 contributes to the Mg(2+) binding site. Cysteine 123 serves as a coordination point for [2Fe-2S] cluster. Aspartate 124 and lysine 125 together coordinate Mg(2+). The residue at position 125 (lysine 125) is an N6-carboxylysine. Cysteine 192 lines the [2Fe-2S] cluster pocket. Glutamate 489 contacts Mg(2+). The active-site Proton acceptor is serine 515.

The protein belongs to the IlvD/Edd family. Homodimer. Requires [2Fe-2S] cluster as cofactor. The cofactor is Mg(2+).

The catalysed reaction is (2R)-2,3-dihydroxy-3-methylbutanoate = 3-methyl-2-oxobutanoate + H2O. It carries out the reaction (2R,3R)-2,3-dihydroxy-3-methylpentanoate = (S)-3-methyl-2-oxopentanoate + H2O. It participates in amino-acid biosynthesis; L-isoleucine biosynthesis; L-isoleucine from 2-oxobutanoate: step 3/4. It functions in the pathway amino-acid biosynthesis; L-valine biosynthesis; L-valine from pyruvate: step 3/4. Functionally, functions in the biosynthesis of branched-chain amino acids. Catalyzes the dehydration of (2R,3R)-2,3-dihydroxy-3-methylpentanoate (2,3-dihydroxy-3-methylvalerate) into 2-oxo-3-methylpentanoate (2-oxo-3-methylvalerate) and of (2R)-2,3-dihydroxy-3-methylbutanoate (2,3-dihydroxyisovalerate) into 2-oxo-3-methylbutanoate (2-oxoisovalerate), the penultimate precursor to L-isoleucine and L-valine, respectively. In Bacteroides thetaiotaomicron (strain ATCC 29148 / DSM 2079 / JCM 5827 / CCUG 10774 / NCTC 10582 / VPI-5482 / E50), this protein is Dihydroxy-acid dehydratase.